The chain runs to 240 residues: MLTLGVNIDHVATIRQARRTVEPDPVAAAVLAEIGGADGITVHLREDRRHIQDRDVRILRQTVRTHLNLEMAPTEEMIAIALDIKPDYVTLVPEKRQEVTTEGGIDMLGNFDRFCRVVERLQAANIPVSWFIDADFAQIQAAANTGAKFIELHTGQYAEAQQESDRQALLTILKEGCEYASSLGLRVNAGHGLTYGNVYAVACLPNMEELNIGHTIISRAVLVGLERAVREMKLAMRGQL.

A 3-amino-2-oxopropyl phosphate-binding site is contributed by Asn7. 9–10 (DH) contributes to the 1-deoxy-D-xylulose 5-phosphate binding site. A 3-amino-2-oxopropyl phosphate-binding site is contributed by Arg18. His43 functions as the Proton acceptor in the catalytic mechanism. The 1-deoxy-D-xylulose 5-phosphate site is built by Arg45 and His50. Catalysis depends on Glu70, which acts as the Proton acceptor. Thr100 contacts 1-deoxy-D-xylulose 5-phosphate. Residue His191 is the Proton donor of the active site. 3-amino-2-oxopropyl phosphate-binding positions include Gly192 and 213-214 (GH).

Belongs to the PNP synthase family. In terms of assembly, homooctamer; tetramer of dimers.

The protein localises to the cytoplasm. It catalyses the reaction 3-amino-2-oxopropyl phosphate + 1-deoxy-D-xylulose 5-phosphate = pyridoxine 5'-phosphate + phosphate + 2 H2O + H(+). Its pathway is cofactor biosynthesis; pyridoxine 5'-phosphate biosynthesis; pyridoxine 5'-phosphate from D-erythrose 4-phosphate: step 5/5. Catalyzes the complicated ring closure reaction between the two acyclic compounds 1-deoxy-D-xylulose-5-phosphate (DXP) and 3-amino-2-oxopropyl phosphate (1-amino-acetone-3-phosphate or AAP) to form pyridoxine 5'-phosphate (PNP) and inorganic phosphate. This chain is Pyridoxine 5'-phosphate synthase, found in Microcystis aeruginosa (strain NIES-843 / IAM M-2473).